The sequence spans 288 residues: Sulfur carrier protein FdhD (288 aa).

C122 acts as the Cysteine persulfide intermediate in catalysis. Position 268–273 (268–273) interacts with Mo-bis(molybdopterin guanine dinucleotide); that stretch reads FVRGER.

Belongs to the FdhD family.

It localises to the cytoplasm. In terms of biological role, required for formate dehydrogenase (FDH) activity. Acts as a sulfur carrier protein that transfers sulfur from IscS to the molybdenum cofactor prior to its insertion into FDH. This Anaeromyxobacter dehalogenans (strain 2CP-C) protein is Sulfur carrier protein FdhD.